The sequence spans 608 residues: Threonine--tRNA ligase (608 aa).

Residues M1 to P145 are editing domain. Catalytic regions lie at residues P192 to P489 and K193 to P489. 3 residues coordinate Zn(2+): C286, H337, and H458.

Belongs to the class-II aminoacyl-tRNA synthetase family. Homodimer. Zn(2+) serves as cofactor.

Its subcellular location is the cytoplasm. It catalyses the reaction tRNA(Thr) + L-threonine + ATP = L-threonyl-tRNA(Thr) + AMP + diphosphate + H(+). In terms of biological role, catalyzes the attachment of threonine to tRNA(Thr) in a two-step reaction: L-threonine is first activated by ATP to form Thr-AMP and then transferred to the acceptor end of tRNA(Thr). Also edits incorrectly charged L-seryl-tRNA(Thr). In Thermofilum pendens (strain DSM 2475 / Hrk 5), this protein is Threonine--tRNA ligase.